Consider the following 120-residue polypeptide: MKTTRKESLKRRHRRIRRKVSGTPDCPRLAVFRSNHHIYAQIIDDVAQHTLAAASTLEPDLRNSLSSGATCEASAAVGKLVAERGMAKGIEQVVFDRGGNLYHGRVKALADAAREAGLQF.

The interval 1–22 (MKTTRKESLKRRHRRIRRKVSG) is disordered. A compositionally biased stretch (basic residues) spans 8–20 (SLKRRHRRIRRKV).

It belongs to the universal ribosomal protein uL18 family. Part of the 50S ribosomal subunit; part of the 5S rRNA/L5/L18/L25 subcomplex. Contacts the 5S and 23S rRNAs.

This is one of the proteins that bind and probably mediate the attachment of the 5S RNA into the large ribosomal subunit, where it forms part of the central protuberance. The sequence is that of Large ribosomal subunit protein uL18 from Crocosphaera subtropica (strain ATCC 51142 / BH68) (Cyanothece sp. (strain ATCC 51142)).